Consider the following 33-residue polypeptide: DCGTIWHYCGTDQSECCEGWKCSRQLCKYVIDW.

Intrachain disulfides connect Cys-2–Cys-17, Cys-9–Cys-22, and Cys-16–Cys-27. Tryptophan amide is present on Trp-33.

In terms of tissue distribution, expressed by the venom gland.

The protein localises to the secreted. Functionally, blocks transient outward voltage-gated potassium channels in rat ventricular myocytes (thus prolonging action-potential duration) and rat Kv4.2/KCNA4 channels expressed in Xenopus oocytes. Is also a weak blocker of calcium channels in rat cerebellar granule cells. The chain is Kappa-sparatoxin-Hv1a from Heteropoda venatoria (Brown huntsman spider).